The chain runs to 332 residues: Ornithine carbamoyltransferase 1, catabolic (332 aa).

Carbamoyl phosphate is bound by residues 56–59 (STRT), glutamine 83, arginine 107, and 134–137 (HPTQ). L-ornithine-binding positions include asparagine 167, aspartate 231, and 235 to 236 (SM). Carbamoyl phosphate-binding positions include 273–274 (CL) and arginine 318.

The protein belongs to the aspartate/ornithine carbamoyltransferase superfamily. OTCase family.

It is found in the cytoplasm. It catalyses the reaction carbamoyl phosphate + L-ornithine = L-citrulline + phosphate + H(+). It participates in amino-acid degradation; L-arginine degradation via ADI pathway; carbamoyl phosphate from L-arginine: step 2/2. In terms of biological role, reversibly catalyzes the transfer of the carbamoyl group from carbamoyl phosphate (CP) to the N(epsilon) atom of ornithine (ORN) to produce L-citrulline. This Staphylococcus epidermidis (strain ATCC 12228 / FDA PCI 1200) protein is Ornithine carbamoyltransferase 1, catabolic (arcB1).